A 229-amino-acid chain; its full sequence is Meiotically up-regulated gene 31 protein (229 aa).

Disordered stretches follow at residues 16-68 (EDSA…EEDK) and 189-229 (GLPE…TTWA).

Its subcellular location is the endoplasmic reticulum. Its function is as follows. Has a role in meiosis. The polypeptide is Meiotically up-regulated gene 31 protein (mug31) (Schizosaccharomyces pombe (strain 972 / ATCC 24843) (Fission yeast)).